The sequence spans 151 residues: 3-hydroxyacyl-[acyl-carrier-protein] dehydratase FabZ (151 aa).

His-54 is an active-site residue.

It belongs to the thioester dehydratase family. FabZ subfamily.

The protein localises to the cytoplasm. The catalysed reaction is a (3R)-hydroxyacyl-[ACP] = a (2E)-enoyl-[ACP] + H2O. In terms of biological role, involved in unsaturated fatty acids biosynthesis. Catalyzes the dehydration of short chain beta-hydroxyacyl-ACPs and long chain saturated and unsaturated beta-hydroxyacyl-ACPs. The polypeptide is 3-hydroxyacyl-[acyl-carrier-protein] dehydratase FabZ (Salmonella agona (strain SL483)).